The following is a 520-amino-acid chain: MENIEKLLMQEKILMLELDLVKAKISLARANGSSQQGELSLHRETPEKEEAVHSALATFTPTQVKAIPEQTAPGKESTNPLMASILPKDMNSVQTEIRLKRPSDFLRPYQGISIPQKSELNSTVTLHGVESGIQHPHINYYVVYNGPHAGIYDDWGCTKAATNGVPGVAQKKFATITEARAAADAYTTSQQTDRLNFIPKGEAQLKPKSFAKALTSPSKQKAHWLTLGTKRPSSDPAPKEISFAPEITMDDFLYLYDLGRKFDGEGDDTMFTTDNEKISLFNFRKNADPQMVREAYAAGLIKTIYPSNNLQEIKYLPKKVKDAVKRFRTNCIKNTEKDIFLKIRSTIPVWTIQGLLHKPRQVIEIGVSKKVVPTESKAMESKIQIEDLTELAVKTGEQFIQSLLRLNDKKKIFVNMVEHDTLVYSKNIKDTVSEDQRAIETFQQRVISGNLLGFHCPAICHFIERTVEKEGGTYKCHHCDKGKAIIQDASTDSGPKDGPPPTRSIVEKEDVPTTSSKQVD.

Disordered regions lie at residues 32–51 (GSSQQGELSLHRETPEKEEA) and 487–520 (QDASTDSGPKDGPPPTRSIVEKEDVPTTSSKQVD). Over residues 40–51 (SLHRETPEKEEA) the composition is skewed to basic and acidic residues.

This sequence belongs to the caulimoviridae viroplasmin family.

Its subcellular location is the host cytoplasm. Its function is as follows. Enhances the ribosomal termination-reinitiation event leading to the translation of major open reading frames on the polycistronic viral RNAs. The chain is Transactivator/viroplasmin protein from Arabidopsis thaliana (Mouse-ear cress).